Here is a 653-residue protein sequence, read N- to C-terminus: ATP-dependent zinc metalloprotease FtsH 1 (653 aa).

The Cytoplasmic segment spans residues 1–7 (MSRFFKS). Residues 8-28 (AAFPILIVVVLAFFAQRLINP) traverse the membrane as a helical segment. Residues 29–105 (GDSGPRYDYS…FDIEGTKSNG (77 aa)) are Extracellular-facing. A helical transmembrane segment spans residues 106 to 126 (WLSLLTYVLPFLIFIGFWIFL). Residues 127 to 653 (MNQVQGGGSK…MHFPERPELA (527 aa)) lie on the Cytoplasmic side of the membrane. Residue 198–205 (GPPGTGKT) participates in ATP binding. A Zn(2+)-binding site is contributed by H420. E421 is a catalytic residue. Zn(2+) contacts are provided by H424 and D496. A disordered region spans residues 603-653 (EEVFGAEASPPPDVPLPPATERGRDTPRPLPRPGLAGGAAEMHFPERPELA). Over residues 611–620 (SPPPDVPLPP) the composition is skewed to pro residues.

The protein in the central section; belongs to the AAA ATPase family. This sequence in the C-terminal section; belongs to the peptidase M41 family. In terms of assembly, homohexamer. Requires Zn(2+) as cofactor.

The protein resides in the cell membrane. Acts as a processive, ATP-dependent zinc metallopeptidase for both cytoplasmic and membrane proteins. Plays a role in the quality control of integral membrane proteins. This is ATP-dependent zinc metalloprotease FtsH 1 from Conexibacter woesei (strain DSM 14684 / CCUG 47730 / CIP 108061 / JCM 11494 / NBRC 100937 / ID131577).